The chain runs to 871 residues: uncharacterized protein (871 aa).

Transmembrane regions (helical) follow at residues 11–31 (AFVS…GLFL), 92–112 (YLFT…PILL), 139–159 (FYAH…IIYR), 380–400 (TILT…GCIS), 422–442 (LLGI…MSLV), 475–495 (VQVF…VQVI), 520–540 (FLLQ…TLLL), 562–582 (LSAP…TIMI), 586–606 (IIAP…YFAY), 629–649 (LFQV…LFVL), and 653–673 (WGAT…HLYF). A phosphoserine mark is found at serine 725, serine 726, serine 727, serine 729, serine 737, and serine 761. Polar residues predominate over residues 727–740 (SGSDEFLETSSRTS). A disordered region spans residues 727-746 (SGSDEFLETSSRTSENTKEK).

This sequence belongs to the CSC1 (TC 1.A.17) family.

Its subcellular location is the golgi apparatus membrane. Acts as an osmosensitive calcium-permeable cation channel. This is an uncharacterized protein from Schizosaccharomyces pombe (strain 972 / ATCC 24843) (Fission yeast).